The following is a 92-amino-acid chain: Endoribonuclease HigB (92 aa).

His-92 is a catalytic residue.

As to quaternary structure, forms a complex with the antitoxin HigA which inhibits the mRNA interferase activity. The heterodimer dimerizes to form a HigB-(HigA)2-HigB tetramer that is able to bind to the DNA.

Its function is as follows. Toxic component of a type II toxin-antitoxin (TA) system. A ribosome-associated translation-dependent mRNA interferase. Inhibits translation by sequence-specific cleavage of mRNA. Prefers either in-frame or out-of-frame 5'-AAA-3' codons (lysine). Also cleaves the first three AAAs of stretches of four or more A sequences. 20% of codons containing AA are cleaved and occassionally cuts even at a single A. The chain is Endoribonuclease HigB from Proteus vulgaris.